Reading from the N-terminus, the 400-residue chain is Tryptophan synthase beta chain (400 aa).

Lysine 91 carries the post-translational modification N6-(pyridoxal phosphate)lysine.

It belongs to the TrpB family. As to quaternary structure, tetramer of two alpha and two beta chains. It depends on pyridoxal 5'-phosphate as a cofactor.

It carries out the reaction (1S,2R)-1-C-(indol-3-yl)glycerol 3-phosphate + L-serine = D-glyceraldehyde 3-phosphate + L-tryptophan + H2O. Its pathway is amino-acid biosynthesis; L-tryptophan biosynthesis; L-tryptophan from chorismate: step 5/5. Its function is as follows. The beta subunit is responsible for the synthesis of L-tryptophan from indole and L-serine. The protein is Tryptophan synthase beta chain of Listeria monocytogenes serotype 4a (strain HCC23).